The sequence spans 103 residues: MFVKTGDKVKVISGKDKGKEGTIIKAMPKEGRVVVEGINTIKKHVKPNAQNPNGGIVDTEASIDASNVMLIDPSNNEATRVGYKVVDGKKVRVSKKTGESIDK.

Belongs to the universal ribosomal protein uL24 family. As to quaternary structure, part of the 50S ribosomal subunit.

One of two assembly initiator proteins, it binds directly to the 5'-end of the 23S rRNA, where it nucleates assembly of the 50S subunit. Functionally, one of the proteins that surrounds the polypeptide exit tunnel on the outside of the subunit. The polypeptide is Large ribosomal subunit protein uL24 (Latilactobacillus sakei subsp. sakei (strain 23K) (Lactobacillus sakei subsp. sakei)).